Consider the following 213-residue polypeptide: Uridine kinase (213 aa).

13-20 (GASASGKS) provides a ligand contact to ATP.

Belongs to the uridine kinase family.

The protein resides in the cytoplasm. It carries out the reaction uridine + ATP = UMP + ADP + H(+). The enzyme catalyses cytidine + ATP = CMP + ADP + H(+). The protein operates within pyrimidine metabolism; CTP biosynthesis via salvage pathway; CTP from cytidine: step 1/3. Its pathway is pyrimidine metabolism; UMP biosynthesis via salvage pathway; UMP from uridine: step 1/1. The sequence is that of Uridine kinase from Histophilus somni (strain 129Pt) (Haemophilus somnus).